Consider the following 190-residue polypeptide: Natural killer cells antigen CD94 (190 aa).

The Cytoplasmic portion of the chain corresponds to 1 to 10; it reads MAAFRTTAWR. The chain crosses the membrane as a helical; Signal-anchor for type II membrane protein span at residues 11–31; sequence LISGVLGVICLVLMAALGVLL. At 32-190 the chain is on the extracellular side; sequence KNSLTKRSVQ…FRYICKQQLI (159 aa). 4 disulfides stabilise this stretch: Cys-69/Cys-81, Cys-72/Cys-83, Cys-100/Cys-185, and Cys-163/Cys-177. A C-type lectin domain is found at 79–186; the sequence is YQCNCYFISN…CEKKFRYICK (108 aa). N-linked (GlcNAc...) asparagine glycosylation is found at Asn-104 and Asn-144.

In terms of assembly, can form disulfide-bonded heterodimer with NKG2 family members KLRC1 and KLRC2. KLRD1-KLRC1 heterodimer interacts with peptide-bound MHC-E-B2M heterotrimeric complex. KLRD1 plays a prominent role in directly interacting with MHC-E. KLRD1-KLRC1 interacts with much higher affinity with peptide-bound MHC-E-B2M than KLRD1-KLRC2. Interacts with the adapter protein TYROBP/DAP12; this interaction is required for cell surface expression and cell activation.

It localises to the cell membrane. Its function is as follows. Immune receptor involved in self-nonself discrimination. In complex with KLRC1 or KLRC2 on cytotoxic and regulatory lymphocyte subsets, recognizes non-classical major histocompatibility (MHC) class Ib molecule MHC-E loaded with self-peptides derived from the signal sequence of classical MHC class Ia and non-classical MHC class Ib molecules. Enables cytotoxic cells to monitor the expression of MHC class I molecules in healthy cells and to tolerate self. Primarily functions as a ligand binding subunit as it lacks the capacity to signal. In terms of biological role, KLRD1-KLRC1 acts as an immune inhibitory receptor. Key inhibitory receptor on natural killer (NK) cells that regulates their activation and effector functions. Dominantly counteracts T cell receptor signaling on a subset of memory/effector CD8-positive T cells as part of an antigen-driven response to avoid autoimmunity. On intraepithelial CD8-positive gamma-delta regulatory T cells triggers TGFB1 secretion, which in turn limits the cytotoxic programming of intraepithelial CD8-positive alpha-beta T cells, distinguishing harmless from pathogenic antigens. In MHC-E-rich tumor microenvironment, acts as an immune inhibitory checkpoint and may contribute to progressive loss of effector functions of NK cells and tumor-specific T cells, a state known as cell exhaustion. Upon MHC-E-peptide binding, transmits intracellular signals through KLRC1 immunoreceptor tyrosine-based inhibition motifs (ITIMs) by recruiting INPP5D/SHIP-1 and INPPL1/SHIP-2 tyrosine phosphatases to ITIMs, and ultimately opposing signals transmitted by activating receptors through dephosphorylation of proximal signaling molecules. KLRD1-KLRC2 acts as an immune activating receptor. On cytotoxic lymphocyte subsets recognizes MHC-E loaded with signal sequence-derived peptides from non-classical MHC class Ib MHC-G molecules, likely playing a role in the generation and effector functions of adaptive NK cells and in maternal-fetal tolerance during pregnancy. Regulates the effector functions of terminally differentiated cytotoxic lymphocyte subsets, and in particular may play a role in adaptive NK cell response to viral infection. Upon MHC-E-peptide binding, transmits intracellular signals via the adapter protein TYROBP/DAP12, triggering the phosphorylation of proximal signaling molecules and cell activation. The chain is Natural killer cells antigen CD94 (KLRD1) from Bos taurus (Bovine).